Here is a 277-residue protein sequence, read N- to C-terminus: Release factor glutamine methyltransferase (277 aa).

S-adenosyl-L-methionine-binding positions include 117–121 (GTGTG), D140, W168, and N183. 183–186 (NPPY) serves as a coordination point for substrate.

The protein belongs to the protein N5-glutamine methyltransferase family. PrmC subfamily.

It carries out the reaction L-glutaminyl-[peptide chain release factor] + S-adenosyl-L-methionine = N(5)-methyl-L-glutaminyl-[peptide chain release factor] + S-adenosyl-L-homocysteine + H(+). In terms of biological role, methylates the class 1 translation termination release factors RF1/PrfA and RF2/PrfB on the glutamine residue of the universally conserved GGQ motif. The sequence is that of Release factor glutamine methyltransferase from Salmonella typhimurium (strain LT2 / SGSC1412 / ATCC 700720).